The following is a 622-amino-acid chain: DNA mismatch repair protein MutL (622 aa).

The protein belongs to the DNA mismatch repair MutL/HexB family.

Its function is as follows. This protein is involved in the repair of mismatches in DNA. It is required for dam-dependent methyl-directed DNA mismatch repair. May act as a 'molecular matchmaker', a protein that promotes the formation of a stable complex between two or more DNA-binding proteins in an ATP-dependent manner without itself being part of a final effector complex. The sequence is that of DNA mismatch repair protein MutL from Phenylobacterium zucineum (strain HLK1).